The chain runs to 387 residues: ATP phosphoribosyltransferase regulatory subunit (387 aa).

This sequence belongs to the class-II aminoacyl-tRNA synthetase family. HisZ subfamily. In terms of assembly, heteromultimer composed of HisG and HisZ subunits.

It is found in the cytoplasm. It functions in the pathway amino-acid biosynthesis; L-histidine biosynthesis; L-histidine from 5-phospho-alpha-D-ribose 1-diphosphate: step 1/9. In terms of biological role, required for the first step of histidine biosynthesis. May allow the feedback regulation of ATP phosphoribosyltransferase activity by histidine. The chain is ATP phosphoribosyltransferase regulatory subunit from Ralstonia pickettii (strain 12J).